Reading from the N-terminus, the 664-residue chain is RNA-binding protein RMD9, mitochondrial (664 aa).

The N-terminal 32 residues, 1 to 32 (MFRLVQQQTLKSRVPNQFVSASRNSLNSQFRF), are a transit peptide targeting the mitochondrion. Residues 38 to 68 (LERNPQQDPTTAAPAKSSSDKRNSKKKYENN) are disordered. Positions 55 to 68 (SSDKRNSKKKYENN) are enriched in basic and acidic residues.

It belongs to the RMD9 family. In terms of assembly, monomer. In terms of processing, phosphorylated. Phosphorylation promotes binding to RNA.

It localises to the mitochondrion inner membrane. Functionally, binds the 3'-UTR of mitochondrial mRNAs. Involved in the processing or stability of mitochondrial mRNAs. The protein is RNA-binding protein RMD9, mitochondrial (RMD9) of Kluyveromyces lactis (strain ATCC 8585 / CBS 2359 / DSM 70799 / NBRC 1267 / NRRL Y-1140 / WM37) (Yeast).